A 326-amino-acid polypeptide reads, in one-letter code: Transformer-2 protein homolog (326 aa).

Disordered regions lie at residues 1–114 and 179–326; these read MEVA…PSNV and LHGK…SYRR. Basic and acidic residues predominate over residues 38–55; the sequence is RDSRERSPPRGNSRERSP. Residues 56-85 are compositionally biased toward low complexity; it reads PRGGSPNRGGSPNRGGSPNRGGSPNRGGSP. Positions 104 to 113 are enriched in polar residues; that stretch reads RLANTASPSN. Residues 113 to 191 enclose the RRM domain; that stretch reads NVLGVFGLAP…KSIRTDFSAT (79 aa). The segment covering 220 to 239 has biased composition (gly residues); it reads YGGGDRYGRGDYGGRGGGGD. The span at 240-326 shows a compositional bias: basic and acidic residues; the sequence is RYGRDDRGGD…DERPRDSYRR (87 aa).

The protein belongs to the splicing factor SR family.

The protein localises to the nucleus. Its function is as follows. Sequence-specific RNA-binding protein which participates in the control of pre-mRNA splicing. This Dictyostelium discoideum (Social amoeba) protein is Transformer-2 protein homolog (tra2).